Here is a 526-residue protein sequence, read N- to C-terminus: Bifunctional purine biosynthesis protein PurH (526 aa).

The 147-residue stretch at 1–147 folds into the MGS-like domain; that stretch reads MSVIKRALIS…KNWKHVAIVT (147 aa).

The protein belongs to the PurH family.

The enzyme catalyses (6R)-10-formyltetrahydrofolate + 5-amino-1-(5-phospho-beta-D-ribosyl)imidazole-4-carboxamide = 5-formamido-1-(5-phospho-D-ribosyl)imidazole-4-carboxamide + (6S)-5,6,7,8-tetrahydrofolate. It carries out the reaction IMP + H2O = 5-formamido-1-(5-phospho-D-ribosyl)imidazole-4-carboxamide. It participates in purine metabolism; IMP biosynthesis via de novo pathway; 5-formamido-1-(5-phospho-D-ribosyl)imidazole-4-carboxamide from 5-amino-1-(5-phospho-D-ribosyl)imidazole-4-carboxamide (10-formyl THF route): step 1/1. The protein operates within purine metabolism; IMP biosynthesis via de novo pathway; IMP from 5-formamido-1-(5-phospho-D-ribosyl)imidazole-4-carboxamide: step 1/1. The chain is Bifunctional purine biosynthesis protein PurH from Neisseria gonorrhoeae (strain ATCC 700825 / FA 1090).